The following is a 647-amino-acid chain: Macrolide export ATP-binding/permease protein MacB (647 aa).

Residues 6 to 244 (LEISGCYRTF…VDTAVTKINN (239 aa)) enclose the ABC transporter domain. 42-49 (GASGSGKS) contributes to the ATP binding site. 4 helical membrane-spanning segments follow: residues 273 to 293 (FLTMLGIIIGIASVVSVVALG), 522 to 542 (LLISAIAVISLIVGGIGVMNI), 577 to 597 (LVCLCGGTLGIALAYLIGVVF), and 612 to 632 (SIVAAFACSTLIGVLFGFLPA).

It belongs to the ABC transporter superfamily. Macrolide exporter (TC 3.A.1.122) family. Homodimer. Part of the tripartite efflux system MacAB-TolC, which is composed of an inner membrane transporter, MacB, a periplasmic membrane fusion protein, MacA, and an outer membrane component, TolC. The complex forms a large protein conduit and can translocate molecules across both the inner and outer membranes. Interacts with MacA.

The protein localises to the cell inner membrane. Its function is as follows. Part of the tripartite efflux system MacAB-TolC. MacB is a non-canonical ABC transporter that contains transmembrane domains (TMD), which form a pore in the inner membrane, and an ATP-binding domain (NBD), which is responsible for energy generation. Confers resistance against macrolides. This chain is Macrolide export ATP-binding/permease protein MacB, found in Shewanella sp. (strain W3-18-1).